A 128-amino-acid chain; its full sequence is Large ribosomal subunit protein bL12 (128 aa).

Belongs to the bacterial ribosomal protein bL12 family. In terms of assembly, homodimer. Part of the ribosomal stalk of the 50S ribosomal subunit. Forms a multimeric L10(L12)X complex, where L10 forms an elongated spine to which 2 to 4 L12 dimers bind in a sequential fashion. Binds GTP-bound translation factors.

Forms part of the ribosomal stalk which helps the ribosome interact with GTP-bound translation factors. Is thus essential for accurate translation. This chain is Large ribosomal subunit protein bL12, found in Acidithiobacillus ferrooxidans (strain ATCC 23270 / DSM 14882 / CIP 104768 / NCIMB 8455) (Ferrobacillus ferrooxidans (strain ATCC 23270)).